A 555-amino-acid polypeptide reads, in one-letter code: Glutamine--tRNA ligase (555 aa).

Residues 35-45 carry the 'HIGH' region motif; that stretch reads PEPNGYLHIGH. ATP-binding positions include 36–38 and 42–48; these read EPN and HIGHAKS. Residues D68 and Y213 each coordinate L-glutamine. ATP contacts are provided by residues T232 and 262 to 263; that span reads RL. The 'KMSKS' region motif lies at 269-273; that stretch reads ITSKR.

Belongs to the class-I aminoacyl-tRNA synthetase family. As to quaternary structure, monomer.

It localises to the cytoplasm. The enzyme catalyses tRNA(Gln) + L-glutamine + ATP = L-glutaminyl-tRNA(Gln) + AMP + diphosphate. This is Glutamine--tRNA ligase from Azotobacter vinelandii (strain DJ / ATCC BAA-1303).